We begin with the raw amino-acid sequence, 70 residues long: DNA gyrase inhibitor YacG (70 aa).

Residues cysteine 7, cysteine 10, cysteine 26, and cysteine 30 each contribute to the Zn(2+) site.

It belongs to the DNA gyrase inhibitor YacG family. In terms of assembly, interacts with GyrB. Requires Zn(2+) as cofactor.

Inhibits all the catalytic activities of DNA gyrase by preventing its interaction with DNA. Acts by binding directly to the C-terminal domain of GyrB, which probably disrupts DNA binding by the gyrase. The chain is DNA gyrase inhibitor YacG from Shewanella sediminis (strain HAW-EB3).